The primary structure comprises 324 residues: Phospho-N-acetylmuramoyl-pentapeptide-transferase (324 aa).

The next 10 helical transmembrane spans lie at Thr9 to Val29, Thr53 to Ile73, Val77 to Leu97, Phe117 to Ala137, Ile147 to Ser167, Leu176 to Phe196, Met201 to Asn221, Ile227 to Leu247, Leu253 to Phe273, and Val304 to Phe324.

This sequence belongs to the glycosyltransferase 4 family. MraY subfamily. The cofactor is Mg(2+).

Its subcellular location is the cell membrane. The enzyme catalyses UDP-N-acetyl-alpha-D-muramoyl-L-alanyl-gamma-D-glutamyl-meso-2,6-diaminopimeloyl-D-alanyl-D-alanine + di-trans,octa-cis-undecaprenyl phosphate = di-trans,octa-cis-undecaprenyl diphospho-N-acetyl-alpha-D-muramoyl-L-alanyl-D-glutamyl-meso-2,6-diaminopimeloyl-D-alanyl-D-alanine + UMP. It participates in cell wall biogenesis; peptidoglycan biosynthesis. Functionally, catalyzes the initial step of the lipid cycle reactions in the biosynthesis of the cell wall peptidoglycan: transfers peptidoglycan precursor phospho-MurNAc-pentapeptide from UDP-MurNAc-pentapeptide onto the lipid carrier undecaprenyl phosphate, yielding undecaprenyl-pyrophosphoryl-MurNAc-pentapeptide, known as lipid I. The protein is Phospho-N-acetylmuramoyl-pentapeptide-transferase of Listeria monocytogenes serotype 4b (strain CLIP80459).